The primary structure comprises 228 residues: Ribosomal RNA small subunit methyltransferase G (228 aa).

Residues Gly-82, Leu-87, Asp-105–Thr-107, Val-133–Glu-134, and Arg-147 contribute to the S-adenosyl-L-methionine site.

This sequence belongs to the methyltransferase superfamily. RNA methyltransferase RsmG family.

The protein resides in the cytoplasm. Specifically methylates the N7 position of a guanine in 16S rRNA. The polypeptide is Ribosomal RNA small subunit methyltransferase G (Pelodictyon phaeoclathratiforme (strain DSM 5477 / BU-1)).